Consider the following 1005-residue polypeptide: Probable histidine kinase 4 (1005 aa).

Residues 1-37 are Cytoplasmic-facing; sequence MGVGGGGGGGGGEAAAAVAVEGDEAGKGRRWWRVKVK. Residues 38–58 traverse the membrane as a helical segment; it reads LSTVAVVAWVLASAALWAGLH. Residues 59–333 lie on the Extracellular side of the membrane; it reads WRFRRAALHK…YRNKLHVSWS (275 aa). A CHASE domain is found at 110-321; that stretch reads HPPALDQDTF…GDPLRKHQMV (212 aa). Residues 334 to 354 traverse the membrane as a helical segment; it reads AITTPSGVFVICMLVGYIIYA. Residues 355–1005 lie on the Cytoplasmic side of the membrane; sequence AWSRYDNVKE…QKFLGPCVSS (651 aa). A Histidine kinase domain is found at 389–675; the sequence is TVSHEIRTPM…TFTFTAVLRR (287 aa). Position 392 is a phosphohistidine; by autocatalysis (His392). 2 Response regulatory domains span residues 700-829 and 862-999; these read SALL…FQAL and NILV…QKFL. Asp912 carries the post-translational modification 4-aspartylphosphate.

Post-translationally, activation probably requires a transfer of a phosphate group between a His in the transmitter domain and an Asp of the receiver domain. As to expression, highly expressed in young leaves and spikelets, and at lower levels in roots, mature leaves and stems.

It localises to the cell membrane. It carries out the reaction ATP + protein L-histidine = ADP + protein N-phospho-L-histidine.. Functionally, cytokinin receptor related to bacterial two-component regulators. Functions as a histidine kinase and transmits the stress signal to a downstream MAPK cascade. The chain is Probable histidine kinase 4 from Oryza sativa subsp. japonica (Rice).